We begin with the raw amino-acid sequence, 207 residues long: Thiamine-phosphate synthase (207 aa).

Residues 35–39 (QYRDK) and asparagine 67 contribute to the 4-amino-2-methyl-5-(diphosphooxymethyl)pyrimidine site. The Mg(2+) site is built by aspartate 68 and aspartate 86. Residue threonine 105 participates in 4-amino-2-methyl-5-(diphosphooxymethyl)pyrimidine binding. 132–134 (SVT) serves as a coordination point for 2-[(2R,5Z)-2-carboxy-4-methylthiazol-5(2H)-ylidene]ethyl phosphate. Lysine 135 is a 4-amino-2-methyl-5-(diphosphooxymethyl)pyrimidine binding site. Residue glycine 162 coordinates 2-[(2R,5Z)-2-carboxy-4-methylthiazol-5(2H)-ylidene]ethyl phosphate.

This sequence belongs to the thiamine-phosphate synthase family. Requires Mg(2+) as cofactor.

The enzyme catalyses 2-[(2R,5Z)-2-carboxy-4-methylthiazol-5(2H)-ylidene]ethyl phosphate + 4-amino-2-methyl-5-(diphosphooxymethyl)pyrimidine + 2 H(+) = thiamine phosphate + CO2 + diphosphate. It catalyses the reaction 2-(2-carboxy-4-methylthiazol-5-yl)ethyl phosphate + 4-amino-2-methyl-5-(diphosphooxymethyl)pyrimidine + 2 H(+) = thiamine phosphate + CO2 + diphosphate. The catalysed reaction is 4-methyl-5-(2-phosphooxyethyl)-thiazole + 4-amino-2-methyl-5-(diphosphooxymethyl)pyrimidine + H(+) = thiamine phosphate + diphosphate. It participates in cofactor biosynthesis; thiamine diphosphate biosynthesis; thiamine phosphate from 4-amino-2-methyl-5-diphosphomethylpyrimidine and 4-methyl-5-(2-phosphoethyl)-thiazole: step 1/1. Functionally, condenses 4-methyl-5-(beta-hydroxyethyl)thiazole monophosphate (THZ-P) and 2-methyl-4-amino-5-hydroxymethyl pyrimidine pyrophosphate (HMP-PP) to form thiamine monophosphate (TMP). In Pseudomonas putida (strain ATCC 700007 / DSM 6899 / JCM 31910 / BCRC 17059 / LMG 24140 / F1), this protein is Thiamine-phosphate synthase.